A 599-amino-acid chain; its full sequence is Aspartate--tRNA(Asp/Asn) ligase (599 aa).

Glu-174 contributes to the L-aspartate binding site. The aspartate stretch occupies residues 198-201 (QLFK). L-aspartate is bound at residue Arg-220. ATP is bound by residues 220–222 (RDE) and Gln-229. His-457 serves as a coordination point for L-aspartate. Glu-491 serves as a coordination point for ATP. Arg-498 is an L-aspartate binding site. Residue 543 to 546 (GLDR) participates in ATP binding.

This sequence belongs to the class-II aminoacyl-tRNA synthetase family. Type 1 subfamily. Homodimer.

The protein localises to the cytoplasm. The catalysed reaction is tRNA(Asx) + L-aspartate + ATP = L-aspartyl-tRNA(Asx) + AMP + diphosphate. Aspartyl-tRNA synthetase with relaxed tRNA specificity since it is able to aspartylate not only its cognate tRNA(Asp) but also tRNA(Asn). Reaction proceeds in two steps: L-aspartate is first activated by ATP to form Asp-AMP and then transferred to the acceptor end of tRNA(Asp/Asn). The sequence is that of Aspartate--tRNA(Asp/Asn) ligase from Paraburkholderia phytofirmans (strain DSM 17436 / LMG 22146 / PsJN) (Burkholderia phytofirmans).